We begin with the raw amino-acid sequence, 245 residues long: Ribonuclease 3 (245 aa).

Positions 18–146 (LSEFLENLSI…FVGAIYLDSG (129 aa)) constitute an RNase III domain. E59 lines the Mg(2+) pocket. D63 is a catalytic residue. D132 and E135 together coordinate Mg(2+). Residue E135 is part of the active site. In terms of domain architecture, DRBM spans 173–242 (DYKSLLQEYV…AEVALKAMED (70 aa)).

It belongs to the ribonuclease III family. As to quaternary structure, homodimer. Mg(2+) serves as cofactor.

Its subcellular location is the cytoplasm. The enzyme catalyses Endonucleolytic cleavage to 5'-phosphomonoester.. Functionally, digests double-stranded RNA. Involved in the processing of primary rRNA transcript to yield the immediate precursors to the large and small rRNAs (23S and 16S). Processes some mRNAs, and tRNAs when they are encoded in the rRNA operon. Processes pre-crRNA and tracrRNA of type II CRISPR loci if present in the organism. This chain is Ribonuclease 3, found in Borreliella afzelii (strain PKo) (Borrelia afzelii).